The sequence spans 463 residues: L-seryl-tRNA(Sec) selenium transferase (463 aa).

Lys295 bears the N6-(pyridoxal phosphate)lysine mark.

This sequence belongs to the SelA family. In terms of assembly, homodecamer; pentamer of dimers. Binds only one seryl-tRNA(Sec) per dimer. The cofactor is pyridoxal 5'-phosphate.

The protein localises to the cytoplasm. The catalysed reaction is L-seryl-tRNA(Sec) + selenophosphate + H(+) = L-selenocysteinyl-tRNA(Sec) + phosphate. It participates in aminoacyl-tRNA biosynthesis; selenocysteinyl-tRNA(Sec) biosynthesis; selenocysteinyl-tRNA(Sec) from L-seryl-tRNA(Sec) (bacterial route): step 1/1. Its function is as follows. Converts seryl-tRNA(Sec) to selenocysteinyl-tRNA(Sec) required for selenoprotein biosynthesis. The chain is L-seryl-tRNA(Sec) selenium transferase from Shigella boydii serotype 18 (strain CDC 3083-94 / BS512).